The sequence spans 264 residues: tRNA (guanine-N(1)-)-methyltransferase (264 aa).

S-adenosyl-L-methionine-binding positions include glycine 125 and 145–150 (LGDFVL).

Belongs to the RNA methyltransferase TrmD family. As to quaternary structure, homodimer.

Its subcellular location is the cytoplasm. It carries out the reaction guanosine(37) in tRNA + S-adenosyl-L-methionine = N(1)-methylguanosine(37) in tRNA + S-adenosyl-L-homocysteine + H(+). Specifically methylates guanosine-37 in various tRNAs. The protein is tRNA (guanine-N(1)-)-methyltransferase of Burkholderia cenocepacia (strain ATCC BAA-245 / DSM 16553 / LMG 16656 / NCTC 13227 / J2315 / CF5610) (Burkholderia cepacia (strain J2315)).